Reading from the N-terminus, the 185-residue chain is Ribosome-recycling factor (185 aa).

A disordered region spans residues 136 to 155 (NDDLKKLEKNGDITEDELRA).

It belongs to the RRF family.

Its subcellular location is the cytoplasm. Responsible for the release of ribosomes from messenger RNA at the termination of protein biosynthesis. May increase the efficiency of translation by recycling ribosomes from one round of translation to another. In Bacillus velezensis (strain DSM 23117 / BGSC 10A6 / LMG 26770 / FZB42) (Bacillus amyloliquefaciens subsp. plantarum), this protein is Ribosome-recycling factor.